Consider the following 337-residue polypeptide: tRNA N6-adenosine threonylcarbamoyltransferase (337 aa).

H111 and H115 together coordinate Fe cation. Residues 134–138, D167, G180, and N272 contribute to the substrate site; that span reads LVSGG. D300 contributes to the Fe cation binding site.

The protein belongs to the KAE1 / TsaD family. Requires Fe(2+) as cofactor.

It is found in the cytoplasm. The enzyme catalyses L-threonylcarbamoyladenylate + adenosine(37) in tRNA = N(6)-L-threonylcarbamoyladenosine(37) in tRNA + AMP + H(+). Functionally, required for the formation of a threonylcarbamoyl group on adenosine at position 37 (t(6)A37) in tRNAs that read codons beginning with adenine. Is involved in the transfer of the threonylcarbamoyl moiety of threonylcarbamoyl-AMP (TC-AMP) to the N6 group of A37, together with TsaE and TsaB. TsaD likely plays a direct catalytic role in this reaction. This chain is tRNA N6-adenosine threonylcarbamoyltransferase, found in Pseudoalteromonas translucida (strain TAC 125).